Consider the following 341-residue polypeptide: Paired box protein Pax-9 (341 aa).

The segment at residues 4–130 (AFGEVNQLGG…SSISRILRNK (127 aa)) is a DNA-binding region (paired). The segment at 7–63 (EVNQLGGVFVNGRPLPNAIRLRIVELAQLGIRPCDISRQLRVSHGCVSKILARYNET) is PAI subdomain. An RED subdomain region spans residues 82 to 130 (TVVKHIRTYKQRDPGIFAWEIRDRLLADGVCDKYNVPSVSSISRILRNK). Residues 168–189 (AAAAKVPTPPGVPAIPGSVAMP) are interaction with KDM5B.

Interacts with KDM5B.

The protein resides in the nucleus. In terms of biological role, transcription factor required for normal development of thymus, parathyroid glands, ultimobranchial bodies, teeth, skeletal elements of skull and larynx as well as distal limbs. This Saguinus oedipus (Cotton-top tamarin) protein is Paired box protein Pax-9 (PAX9).